The chain runs to 364 residues: Heat-inducible transcription repressor HrcA (364 aa).

This sequence belongs to the HrcA family.

Its function is as follows. Negative regulator of class I heat shock genes (grpE-dnaK-dnaJ and groELS operons). Prevents heat-shock induction of these operons. This Cyanothece sp. (strain PCC 7425 / ATCC 29141) protein is Heat-inducible transcription repressor HrcA.